Reading from the N-terminus, the 109-residue chain is Large ribosomal subunit protein uL24 (109 aa).

The protein belongs to the universal ribosomal protein uL24 family. In terms of assembly, part of the 50S ribosomal subunit.

One of two assembly initiator proteins, it binds directly to the 5'-end of the 23S rRNA, where it nucleates assembly of the 50S subunit. Its function is as follows. One of the proteins that surrounds the polypeptide exit tunnel on the outside of the subunit. This is Large ribosomal subunit protein uL24 from Rickettsia rickettsii (strain Iowa).